The chain runs to 359 residues: 3-dehydroquinate synthase (359 aa).

NAD(+) is bound by residues 69–74 (DGEKYK), 103–107 (GVVGD), 127–128 (TT), Lys140, Lys149, and 167–170 (TLDT). Residues Glu182, His245, and His262 each contribute to the Zn(2+) site.

This sequence belongs to the sugar phosphate cyclases superfamily. Dehydroquinate synthase family. The cofactor is Co(2+). Zn(2+) is required as a cofactor. Requires NAD(+) as cofactor.

The protein resides in the cytoplasm. The catalysed reaction is 7-phospho-2-dehydro-3-deoxy-D-arabino-heptonate = 3-dehydroquinate + phosphate. The protein operates within metabolic intermediate biosynthesis; chorismate biosynthesis; chorismate from D-erythrose 4-phosphate and phosphoenolpyruvate: step 2/7. In terms of biological role, catalyzes the conversion of 3-deoxy-D-arabino-heptulosonate 7-phosphate (DAHP) to dehydroquinate (DHQ). In Ruthia magnifica subsp. Calyptogena magnifica, this protein is 3-dehydroquinate synthase.